Here is a 220-residue protein sequence, read N- to C-terminus: Large ribosomal subunit protein bL9 (220 aa).

A compositionally biased stretch (low complexity) spans 167–184 (AAAEVEQAEDVAAAEQQD). A disordered region spans residues 167 to 220 (AAAEVEQAEDVAAAEQQDSSPVDDHADDADGATGGEGRDEGAGDASDGEEMPST).

It belongs to the bacterial ribosomal protein bL9 family.

In terms of biological role, binds to the 23S rRNA. The polypeptide is Large ribosomal subunit protein bL9 (Anaplasma marginale (strain St. Maries)).